The sequence spans 843 residues: Protein kintoun (843 aa).

4 disordered regions span residues 212 to 242 (PTAE…VHPM), 371 to 417 (FSRE…PVHS), 545 to 672 (YTVK…GASQ), and 761 to 843 (KKNQ…DDVM). Ser-376 is modified (phosphoserine). Over residues 387 to 397 (PVEEEEADADL) the composition is skewed to acidic residues. Residues 564 to 573 (VKFDHNKESL) are compositionally biased toward basic and acidic residues. Acidic residues predominate over residues 584 to 593 (TEEDEVEEQH). Positions 605–619 (QNKKPSKKQRKRNKK) are enriched in basic residues. Residues 658-671 (YSECNDSSVGSGAS) show a composition bias toward polar residues. Residues 761 to 775 (KKNQKRRDLKLRAQQ) are compositionally biased toward basic residues. A Phosphoserine modification is found at Ser-779.

The protein belongs to the PIH1 family. Kintoun subfamily. In terms of assembly, interacts with Pp1alpha-96A, Pp1-87B, Pp1-13C and flw.

The protein localises to the cytoplasm. In terms of biological role, required for cytoplasmic pre-assembly of axonemal dyneins, thereby playing a central role in motility in cilia and flagella. Involved in pre-assembly of dynein arm complexes in the cytoplasm before intraflagellar transport loads them for the ciliary compartment. This Drosophila ananassae (Fruit fly) protein is Protein kintoun.